Reading from the N-terminus, the 475-residue chain is PRAME family member 20 (475 aa).

Residues 97 to 124 (RWKLQVLDLQDVSENFWMVWSEAMARRC) form an LRR 1; degenerate repeat. One copy of the LRR 2; degenerate repeat lies at 179 to 203 (HLCCKKLKMLGMLFHNIRNILKTVN). The LRR 3; degenerate repeat unit spans residues 204 to 230 (LDCIQEVEVNCNWTLPVLAEFTPYLGQ). One copy of the LRR 4; degenerate repeat lies at 231-265 (MRNLRKLVLSDIDSRYISPEQKKEFVTQFTTQFLK). LRR repeat units follow at residues 266–291 (LRCL…LSCL), 292–323 (KTSL…GQLK), 324–342 (TLDL…PLQV), 348–375 (AATL…ALSR), and 376–400 (CFEL…LLCH).

This sequence belongs to the PRAME family.

The sequence is that of PRAME family member 20 from Homo sapiens (Human).